A 930-amino-acid polypeptide reads, in one-letter code: Zn(2)-C6 fungal-type transcription factor FTF1c (930 aa).

A DNA-binding region (zn(2)-C6 fungal-type) is located at residues 137–164; the sequence is CIACRRKKIRCSGEKPACEHCLCSYIPC.

It is found in the nucleus. Its function is as follows. Zn(2)-C6 fungal-type transcription factor that has a role in the establishment of the fungus within the plant and/or the progress of the disease. Regulates the expression of virulence factors such as SIX1 and SIX6. This chain is Zn(2)-C6 fungal-type transcription factor FTF1c, found in Fusarium oxysporum f. sp. lycopersici (strain 4287 / CBS 123668 / FGSC 9935 / NRRL 34936) (Fusarium vascular wilt of tomato).